The sequence spans 184 residues: Guanylate kinase (184 aa).

Residues 5-183 form the Guanylate kinase-like domain; that stretch reads NGLIVITGPS…ALLEIKKLIK (179 aa). Residue 12 to 19 coordinates ATP; that stretch reads GPSGVGKG.

The protein belongs to the guanylate kinase family.

Its subcellular location is the cytoplasm. The enzyme catalyses GMP + ATP = GDP + ADP. In terms of biological role, essential for recycling GMP and indirectly, cGMP. In Prochlorococcus marinus (strain SARG / CCMP1375 / SS120), this protein is Guanylate kinase.